The primary structure comprises 84 residues: Cell division protein CrgA (84 aa).

2 consecutive transmembrane segments (helical) span residues 31–51 (VAPVMLAMFLIGLAWIVVFYV) and 60–80 (ALDNWNIVVGFGFIAAGFGVS).

It belongs to the CrgA family.

Its subcellular location is the cell membrane. Its function is as follows. Involved in cell division. Coordinates growth and cell division. Required for the formation of the sporulation septa. The polypeptide is Cell division protein CrgA (Streptomyces avermitilis (strain ATCC 31267 / DSM 46492 / JCM 5070 / NBRC 14893 / NCIMB 12804 / NRRL 8165 / MA-4680)).